Here is a 213-residue protein sequence, read N- to C-terminus: Calcineurin B-like protein 8 (213 aa).

Residue glycine 2 is the site of N-myristoyl glycine attachment. 4 consecutive EF-hand domains span residues 31–66 (EVEA…RNSN), 67–102 (KKNL…FHPE), 104–139 (PLGD…LLNE), and 148–183 (AVEQ…NPAL). Ca(2+) contacts are provided by aspartate 161, asparagine 163, aspartate 165, lysine 167, and glutamate 172.

This sequence belongs to the calcineurin regulatory subunit family. Homodimer. As to expression, expressed at low levels in roots, shoots, culms, leaves and young spikelets.

The protein resides in the cell membrane. Its function is as follows. Acts as a calcium sensor. May function as positive regulator of salt stress responses. CBL proteins interact with CIPK serine-threonine protein kinases. Binding of a CBL protein to the regulatory NAF domain of a CIPK protein lead to the activation of the kinase in a calcium-dependent manner. This is Calcineurin B-like protein 8 (CBL8) from Oryza sativa subsp. japonica (Rice).